Here is a 538-residue protein sequence, read N- to C-terminus: Phosphoenolpyruvate carboxykinase (ATP) (538 aa).

Positions 64, 205, and 211 each coordinate substrate. ATP-binding positions include Lys-211, His-230, and 246 to 254 (GLSGTGKTT). The Mn(2+) site is built by Lys-211 and His-230. Asp-267 serves as a coordination point for Mn(2+). ATP contacts are provided by residues Glu-295, Arg-331, 447-448 (RI), and Thr-453. Arg-331 provides a ligand contact to substrate.

The protein belongs to the phosphoenolpyruvate carboxykinase (ATP) family. As to quaternary structure, monomer. Mn(2+) is required as a cofactor.

It localises to the cytoplasm. The catalysed reaction is oxaloacetate + ATP = phosphoenolpyruvate + ADP + CO2. It functions in the pathway carbohydrate biosynthesis; gluconeogenesis. Involved in the gluconeogenesis. Catalyzes the conversion of oxaloacetate (OAA) to phosphoenolpyruvate (PEP) through direct phosphoryl transfer between the nucleoside triphosphate and OAA. The chain is Phosphoenolpyruvate carboxykinase (ATP) from Haemophilus influenzae (strain PittGG).